The sequence spans 224 residues: ATP-dependent dethiobiotin synthetase BioD (224 aa).

Residue T18 coordinates Mg(2+). K39 is an active-site residue. S43 is a binding site for substrate. Residues D56 and E117 each coordinate Mg(2+). Residues D56, 117–120, and 177–178 each bind ATP; these read EGVG and NE.

Belongs to the dethiobiotin synthetase family. Homodimer. Mg(2+) is required as a cofactor.

Its subcellular location is the cytoplasm. It carries out the reaction (7R,8S)-7,8-diammoniononanoate + CO2 + ATP = (4R,5S)-dethiobiotin + ADP + phosphate + 3 H(+). It functions in the pathway cofactor biosynthesis; biotin biosynthesis; biotin from 7,8-diaminononanoate: step 1/2. Its function is as follows. Catalyzes a mechanistically unusual reaction, the ATP-dependent insertion of CO2 between the N7 and N8 nitrogen atoms of 7,8-diaminopelargonic acid (DAPA, also called 7,8-diammoniononanoate) to form a ureido ring. This Xanthomonas axonopodis pv. citri (strain 306) protein is ATP-dependent dethiobiotin synthetase BioD.